The primary structure comprises 352 residues: Nicotinate-nucleotide--dimethylbenzimidazole phosphoribosyltransferase (352 aa).

Glu-318 functions as the Proton acceptor in the catalytic mechanism.

The protein belongs to the CobT family.

The enzyme catalyses 5,6-dimethylbenzimidazole + nicotinate beta-D-ribonucleotide = alpha-ribazole 5'-phosphate + nicotinate + H(+). It participates in nucleoside biosynthesis; alpha-ribazole biosynthesis; alpha-ribazole from 5,6-dimethylbenzimidazole: step 1/2. Functionally, catalyzes the synthesis of alpha-ribazole-5'-phosphate from nicotinate mononucleotide (NAMN) and 5,6-dimethylbenzimidazole (DMB). The chain is Nicotinate-nucleotide--dimethylbenzimidazole phosphoribosyltransferase from Dehalococcoides mccartyi (strain CBDB1).